The sequence spans 144 residues: Large ribosomal subunit protein uL15 (144 aa).

Over residues 1 to 14 the composition is skewed to basic residues; it reads MVVRREKKSRKMRG. The tract at residues 1-35 is disordered; the sequence is MVVRREKKSRKMRGSRTMGWGIRGQHRDRGSQGGR.

Belongs to the universal ribosomal protein uL15 family. Part of the 50S ribosomal subunit.

Functionally, binds to the 23S rRNA. The protein is Large ribosomal subunit protein uL15 of Saccharolobus solfataricus (strain ATCC 35092 / DSM 1617 / JCM 11322 / P2) (Sulfolobus solfataricus).